The primary structure comprises 252 residues: 3-dehydroquinate dehydratase (252 aa).

3-dehydroquinate contacts are provided by residues 46-48 and arginine 82; that span reads EWR. Histidine 143 functions as the Proton donor/acceptor in the catalytic mechanism. Catalysis depends on lysine 170, which acts as the Schiff-base intermediate with substrate. Residues arginine 212, serine 231, and glutamine 235 each coordinate 3-dehydroquinate.

It belongs to the type-I 3-dehydroquinase family. In terms of assembly, homodimer.

It carries out the reaction 3-dehydroquinate = 3-dehydroshikimate + H2O. Its pathway is metabolic intermediate biosynthesis; chorismate biosynthesis; chorismate from D-erythrose 4-phosphate and phosphoenolpyruvate: step 3/7. Functionally, involved in the third step of the chorismate pathway, which leads to the biosynthesis of aromatic amino acids. Catalyzes the cis-dehydration of 3-dehydroquinate (DHQ) and introduces the first double bond of the aromatic ring to yield 3-dehydroshikimate. The chain is 3-dehydroquinate dehydratase from Listeria monocytogenes serotype 4b (strain F2365).